The chain runs to 362 residues: Protein RecA (362 aa).

77-84 (GPESSGKT) lines the ATP pocket.

The protein belongs to the RecA family.

Its subcellular location is the cytoplasm. Its function is as follows. Can catalyze the hydrolysis of ATP in the presence of single-stranded DNA, the ATP-dependent uptake of single-stranded DNA by duplex DNA, and the ATP-dependent hybridization of homologous single-stranded DNAs. It interacts with LexA causing its activation and leading to its autocatalytic cleavage. The chain is Protein RecA from Rhizobium etli (strain CIAT 652).